Consider the following 857-residue polypeptide: Protein argonaute-1 (857 aa).

Residues 227-346 (PVIEFMCEVL…LPLEVCNIVA (120 aa)) form the PAZ domain. Interaction with guide RNA regions lie at residues 309-314 (YFKQKY) and 522-564 (GKTP…LCLK). One can recognise a Piwi domain in the interval 515–816 (LIIVILPGKT…VAFRARYHLV (302 aa)). The tract at residues 670–675 (PEGQLP) is impairs access of bound RNA to the active site. Interaction with guide RNA stretches follow at residues 708–712 (RHHTR), 751–759 (HAGIQGTSR), and 788–813 (YVRC…RARY).

Belongs to the argonaute family. Ago subfamily. Interacts with DDB1, DDX5, DDX6, DHX30, DHX36, DDX47, DICER1, AGO2, ELAVL1, HNRNPF, IGF2BP1, ILF3, IMP8, MATR3, MOV10, PABPC1, PRMT5, RBM4, SART3, TNRC6B, UPF1 and YBX1. Associates with polysomes and messenger ribonucleoproteins (mNRPs). Interacts with LIMD1, WTIP and AJUBA. Interacts with APOBEC3F, APOBEC3G and APOBEC3H. Ubiquitinated on surface-exposed lysines by a SCF-like E3 ubiquitin-protein ligase complex containing ZSWIM8 during target-directed microRNA degradation (TDMD), a process that mediates degradation of microRNAs (miRNAs). Ubiquitination by the SCF-like E3 ubiquitin-protein ligase complex containing ZSWIM8 leads to its subsequent degradation, thereby exposing miRNAs for degradation. ZSWIM8 recognizes and binds AGO1 when it is engaged with a TDMD target.

Its subcellular location is the cytoplasm. It localises to the P-body. Required for RNA-mediated gene silencing (RNAi). Binds to short RNAs such as microRNAs (miRNAs) or short interfering RNAs (siRNAs), and represses the translation of mRNAs which are complementary to them. Lacks endonuclease activity and does not appear to cleave target mRNAs. Also required for transcriptional gene silencing (TGS) of promoter regions which are complementary to bound short antigene RNAs (agRNAs). In Homo sapiens (Human), this protein is Protein argonaute-1 (AGO1).